The sequence spans 679 residues: Methionine--tRNA ligase (679 aa).

Zn(2+)-binding residues include Cys147, Cys150, Cys160, and Cys163. The 'KMSKS' region motif lies at 332–336; it reads KISTS. ATP is bound at residue Thr335. One can recognise a tRNA-binding domain in the interval 578–679; it reads DFMKLDIRVG…REVKPGSEVK (102 aa).

Belongs to the class-I aminoacyl-tRNA synthetase family. MetG type 1 subfamily. In terms of assembly, homodimer. Requires Zn(2+) as cofactor.

The protein resides in the cytoplasm. The enzyme catalyses tRNA(Met) + L-methionine + ATP = L-methionyl-tRNA(Met) + AMP + diphosphate. Functionally, is required not only for elongation of protein synthesis but also for the initiation of all mRNA translation through initiator tRNA(fMet) aminoacylation. The protein is Methionine--tRNA ligase of Bacteroides fragilis (strain YCH46).